Reading from the N-terminus, the 85-residue chain is uncharacterized protein (85 aa).

Disordered regions lie at residues 1–28 and 35–54; these read MPQK…LRKA and SKKK…SLTE. Over residues 35 to 48 the composition is skewed to basic residues; it reads SKKKSLQHLKKLKK.

It localises to the nucleus. This is an uncharacterized protein from Saccharomyces cerevisiae (strain ATCC 204508 / S288c) (Baker's yeast).